The sequence spans 349 residues: Selenide, water dikinase (349 aa).

The active site involves C17. Residues K20 and 48–50 (MAD) contribute to the ATP site. Residue D51 coordinates Mg(2+). Residues D68, D91, and 139 to 141 (GHS) each bind ATP. Residue D91 coordinates Mg(2+). D227 provides a ligand contact to Mg(2+).

The protein belongs to the selenophosphate synthase 1 family. Class I subfamily. Homodimer. Mg(2+) serves as cofactor.

It carries out the reaction hydrogenselenide + ATP + H2O = selenophosphate + AMP + phosphate + 2 H(+). Its function is as follows. Synthesizes selenophosphate from selenide and ATP. The protein is Selenide, water dikinase of Rhizobium meliloti (strain 1021) (Ensifer meliloti).